Here is a 61-residue protein sequence, read N- to C-terminus: Beta-defensin 13 (61 aa).

An N-terminal signal peptide occupies residues 1–21 (MRLLYLLFAAVMLLFLQAVPA). Ser24, Arg40, His44, Asn51, Asn53, Gly54, His58, and Lys61 together coordinate a 1,2-diacyl-sn-glycero-3-phosphate. Intrachain disulfides connect Cys31/Cys59, Cys38/Cys52, and Cys42/Cys60.

The protein belongs to the beta-defensin family. In terms of assembly, monomeric. Forms multimeric, probably including tetrameric, complexes in the presence of phospholipid phosphatidic acid.

Its subcellular location is the secreted. Exhibits antimicrobial activity against fungi. Antimicrobial activity in a pH-dependent manner against the yeast C.albicans; activity is salt tolerant and retains antifungal activity in NaCl concentrations of 100mM. Permeabilizes C.albicans cell membranes via targeting plasma membrane phospholipid phosphatidic acid. This chain is Beta-defensin 13, found in Crocodylus porosus (Saltwater crocodile).